A 428-amino-acid polypeptide reads, in one-letter code: Glutamine synthetase leaf isozyme, chloroplastic (428 aa).

A chloroplast-targeting transit peptide spans 1–49 (MAQILAPSIQCQTRITKTSPLATPISSKMWSSLVMKQNKKVARSAKFRV). Positions 75–155 (IIAEYIWIGG…VICDAYTPQG (81 aa)) constitute a GS beta-grasp domain. One can recognise a GS catalytic domain in the interval 159-428 (PTNKRHKAAE…LAAQKIALKV (270 aa)).

This sequence belongs to the glutamine synthetase family. Homooctamer.

It localises to the plastid. The protein localises to the chloroplast. The catalysed reaction is L-glutamate + NH4(+) + ATP = L-glutamine + ADP + phosphate + H(+). Functionally, the light-modulated chloroplast enzyme, encoded by a nuclear gene and expressed primarily in leaves, is responsible for the reassimilation of the ammonia generated by photorespiration. This is Glutamine synthetase leaf isozyme, chloroplastic (GS2) from Medicago sativa (Alfalfa).